Reading from the N-terminus, the 223-residue chain is Putative PAN domain-containing protein R486 (223 aa).

Positions 1–23 are cleaved as a signal peptide; that stretch reads MSQTAIIIWIVVIIILLVLGGLG. The disordered stretch occupies residues 39–73; that stretch reads PTPINPPSSITPIQPINPPSSITPIQPSGPPSGGN. A compositionally biased stretch (low complexity) spans 45-64; sequence PSSITPIQPINPPSSITPIQ. PAN domains are found at residues 80 to 155 and 159 to 223; these read CPAY…EDGC and ARYN…KMPH. Intrachain disulfides connect cysteine 80-cysteine 155 and cysteine 109-cysteine 131. N-linked (GlcNAc...) asparagine; by host glycosylation is found at asparagine 162, asparagine 189, and asparagine 213. Cysteines 182 and 204 form a disulfide.

Its subcellular location is the secreted. The protein resides in the virion. This chain is Putative PAN domain-containing protein R486, found in Acanthamoeba polyphaga mimivirus (APMV).